The following is a 132-amino-acid chain: Small ribosomal subunit protein uS8 (132 aa).

Belongs to the universal ribosomal protein uS8 family. As to quaternary structure, part of the 30S ribosomal subunit. Contacts proteins S5 and S12.

In terms of biological role, one of the primary rRNA binding proteins, it binds directly to 16S rRNA central domain where it helps coordinate assembly of the platform of the 30S subunit. This chain is Small ribosomal subunit protein uS8, found in Flavobacterium johnsoniae (strain ATCC 17061 / DSM 2064 / JCM 8514 / BCRC 14874 / CCUG 350202 / NBRC 14942 / NCIMB 11054 / UW101) (Cytophaga johnsonae).